Here is a 194-residue protein sequence, read N- to C-terminus: uncharacterized protein (194 aa).

One can recognise an HTH tetR-type domain in the interval 6–66 (SGKYEKILQA…AIAENLLTHT (61 aa)). Positions 29–48 (SISDIVKKAGTAQGTFYLYF) form a DNA-binding region, H-T-H motif.

This is an uncharacterized protein from Bacillus subtilis (strain 168).